A 158-amino-acid polypeptide reads, in one-letter code: MALFHNPEERPYKLPDLCRTLDTTLHDVTIDCVYCRRQLQRTEVYEFAFGDLNVVYRDGVPLAACQSCIKFYAKIRELRYYSESVYATTLETITNTKLYDLSIRCMCCLKPLSPAEKLRHLNSKRRFHKIAGNFTGQCRHCWTSKREDRRRTRQETQV.

Zinc fingers lie at residues 32–68 (CVYCRRQLQRTEVYEFAFGDLNVVYRDGVPLAACQSC) and 105–141 (CMCCLKPLSPAEKLRHLNSKRRFHKIAGNFTGQCRHC). Positions 156–158 (TQV) match the PDZ-binding domain motif.

Belongs to the papillomaviridae E6 protein family. As to quaternary structure, forms homodimers. Interacts with ubiquitin-protein ligase UBE3A/E6-AP; this interaction stimulates UBE3A ubiquitin activity. Interacts with host BAK1.

The protein resides in the host cytoplasm. It localises to the host nucleus. Plays a major role in the induction and maintenance of cellular transformation. E6 associates with host UBE3A/E6-AP ubiquitin-protein ligase and modulates its activity. Protects host keratinocytes from apoptosis by mediating the degradation of host BAK1. May also inhibit host immune response. The chain is Protein E6 from Homo sapiens (Human).